The sequence spans 377 residues: Galactoside alpha-(1,2)-fucosyltransferase 1 (377 aa).

The Cytoplasmic portion of the chain corresponds to 1 to 8 (MWTPSRRQ). The helical; Signal-anchor for type II membrane protein transmembrane segment at 9–26 (LCLAFLLVCVLSAGSFFF) threads the bilayer. At 27-377 (HLNGGNFFRN…WKPDSLFRLV (351 aa)) the chain is on the lumenal side. N67, N303, and N329 each carry an N-linked (GlcNAc...) asparagine glycan.

It belongs to the glycosyltransferase 11 family. As to expression, in the adult, highly expressed in pancreas, testis and epididymis and to a lesser extent in thymus, lung, stomach, small intestine, colon, spleen and uterus. Not expressed in brain, heart, skeletal muscle, kidney, liver and bone marrow. Expressed in epididymis and testis.

The protein localises to the golgi apparatus. The protein resides in the golgi stack membrane. It carries out the reaction a beta-D-galactosyl-(1-&gt;4)-N-acetyl-beta-D-glucosaminyl derivative + GDP-beta-L-fucose = an alpha-L-Fuc-(1-&gt;2)-beta-D-Gal-(1-&gt;4)-beta-D-GlcNAc derivative + GDP + H(+). It catalyses the reaction a ganglioside GA1 + GDP-beta-L-fucose = a ganglioside Fuc-GA1 + GDP + H(+). The catalysed reaction is a beta-D-Gal-(1-&gt;3)-beta-D-GlcNAc-(1-&gt;3)-beta-D-Gal-(1-&gt;4)-beta-D-Glc-(1&lt;-&gt;1')-Cer(d18:1(4E)) + GDP-beta-L-fucose = alpha-L-fucosyl-(1-&gt;2)- beta-D-galactosyl-(1-&gt;3)-N-acetyl-beta-D-glucosaminyl-(1-&gt;3)-beta-D-galactosyl-(1-&gt;4)-beta-D-glucosyl-(1&lt;-&gt;1')-N-acylsphing-4-enine + GDP + H(+). The enzyme catalyses a neolactoside nLc4Cer(d18:1(4E)) + GDP-beta-L-fucose = a neolactoside IV(2)-alpha-Fuc-nLc4Cer(d18:1(4E)) + GDP + H(+). It carries out the reaction a ganglioside GM1 + GDP-beta-L-fucose = a ganglioside Fuc-GM1 + GDP + H(+). It catalyses the reaction beta-D-galactosyl-(1-&gt;3)-N-acetyl-D-galactosamine + GDP-beta-L-fucose = alpha-L-fucosyl-(1-&gt;2)-beta-D-galactosyl-(1-&gt;3)-N-acetyl-D-galactosamine + GDP + H(+). The protein operates within protein modification; protein glycosylation. Catalyzes the transfer of L-fucose, from a guanosine diphosphate-beta-L-fucose, to the terminal galactose residue of glycoconjugates through an alpha(1,2) linkage leading to H antigen synthesis that is an intermediate substrate in the synthesis of ABO blood group antigens. H antigen is essential for maturation of the glomerular layer of the main olfactory bulb, in cell migration and early cell-cell contacts during tumor associated angiogenesis. Preferentially fucosylates soluble lactose and to a lesser extent, fucosylates glycolipids gangliosides GA1 and GM1a. This chain is Galactoside alpha-(1,2)-fucosyltransferase 1, found in Mus musculus (Mouse).